Consider the following 437-residue polypeptide: MAVSKVYARSVYDSRGNPTVEVELTTEKGVFRSIVPSGASTGVHEALEMRDGDKSKWMGKGVLHAVKNVNDVIAPAFVKANIDVKDQKAVDDFLISLDGTANKSKLGANAILGVSLAASRAAAAEKNVPLYKHLADLSKSKTSPYVLPVPFLNVLNGGSHAGGALALQEFMIAPTGAKTFAEALRIGSEVYHNLKSLTKKRYGASAGNVGDEGGVAPNIQTAEEALDLIVDAIKAAGHDGKIKIGLDCASSEFFKDGKYDLDFKNPNSDKSKWLTGPQLADLYHSLMKRYPIVSIEDPFAEDDWEAWSHFFKTAGIQIVADDLTVTNPKRIATAIEKKAADALLLKVNQIGTLSESIKAAQDSFAAGWGVMVSHRSGETEDTFIADLVVGLRTGQIKTGAPARSERLAKLNQLLRIEEELGDNAVFAGENFHHGDKL.

A Glycyl lysine isopeptide (Lys-Gly) (interchain with G-Cter in ubiquitin) cross-link involves residue K60. Phosphoserine is present on residues S119 and S138. Positions 160 and 169 each coordinate substrate. At S188 the chain carries Phosphoserine. The Proton donor role is filled by E212. K243 participates in a covalent cross-link: Glycyl lysine isopeptide (Lys-Gly) (interchain with G-Cter in ubiquitin). Mg(2+) is bound by residues D247 and E296. A substrate-binding site is contributed by E296. Residue T313 is modified to Phosphothreonine. D321 is a binding site for substrate. D321 contacts Mg(2+). T324 carries the phosphothreonine modification. The active-site Proton acceptor is K346. K358 is covalently cross-linked (Glycyl lysine isopeptide (Lys-Gly) (interchain with G-Cter in ubiquitin)). Substrate-binding positions include 373 to 376 (SHRS) and K397.

The protein belongs to the enolase family. In terms of assembly, homodimer. It depends on Mg(2+) as a cofactor.

The protein localises to the cytoplasm. The enzyme catalyses (2R)-2-phosphoglycerate = phosphoenolpyruvate + H2O. It functions in the pathway carbohydrate degradation; glycolysis; pyruvate from D-glyceraldehyde 3-phosphate: step 4/5. The chain is Enolase 1 (ENO1) from Saccharomyces cerevisiae (strain ATCC 204508 / S288c) (Baker's yeast).